The chain runs to 441 residues: Eukaryotic translation initiation factor 3 subunit E (441 aa).

The PCI domain maps to 223–407; it reads IFFNHDNGRT…GTVIMEPTQP (185 aa).

The protein belongs to the eIF-3 subunit E family. Component of the eukaryotic translation initiation factor 3 (eIF-3) complex (Potential). Binds to the translation initiation factors TIF3F1 and TIF3H1. Associates with the CSN (COP9 signalosome) complex. Interacts directly with CSN1, CSN4, CSN6A, CSN6B, CSN7, CSN8 and TIF3C1. Binds to 40S small ribosomal subunit S9 (RPS9B and RPS9C) via its N-terminal part. Interacts with the 26S proteasome subunit RPN12a via its C-terminal part. Also binds with At1g27930 and At4g30620.

The protein localises to the cytoplasm. The protein resides in the nucleus. Functionally, component of the eukaryotic translation initiation factor 3 (eIF-3) complex, which is involved in protein synthesis of a specialized repertoire of mRNAs and, together with other initiation factors, stimulates binding of mRNA and methionyl-tRNAi to the 40S ribosome. The eIF-3 complex specifically targets and initiates translation of a subset of mRNAs involved in cell proliferation (Potential). Negatively regulates translation during flower development. The polypeptide is Eukaryotic translation initiation factor 3 subunit E (Arabidopsis thaliana (Mouse-ear cress)).